A 153-amino-acid polypeptide reads, in one-letter code: Large ribosomal subunit protein uL13 (153 aa).

Positions 128–153 (SEHPHEAQSPEVLDVTSMNSKNTRSA) are disordered. Positions 143-153 (TSMNSKNTRSA) are enriched in polar residues.

The protein belongs to the universal ribosomal protein uL13 family. Part of the 50S ribosomal subunit.

In terms of biological role, this protein is one of the early assembly proteins of the 50S ribosomal subunit, although it is not seen to bind rRNA by itself. It is important during the early stages of 50S assembly. In Roseobacter denitrificans (strain ATCC 33942 / OCh 114) (Erythrobacter sp. (strain OCh 114)), this protein is Large ribosomal subunit protein uL13.